The primary structure comprises 302 residues: Ribonucleoside-diphosphate reductase small subunit (302 aa).

Residues E61, E91, and H94 each contribute to the Fe cation site. Y98 is an active-site residue. Residues 147–167 (ILVFLLIEGIFFISSFYSIAL) traverse the membrane as a helical segment. The Fe cation site is built by E154, E188, and H191.

The protein belongs to the ribonucleoside diphosphate reductase small chain family. As to quaternary structure, heterotetramer composed of a homodimer of the large subunit (R1) and a homodimer of the small subunit (R2). Larger multisubunit protein complex are also active, composed of (R1)n(R2)n. It depends on Fe cation as a cofactor.

It is found in the host membrane. It carries out the reaction a 2'-deoxyribonucleoside 5'-diphosphate + [thioredoxin]-disulfide + H2O = a ribonucleoside 5'-diphosphate + [thioredoxin]-dithiol. Its function is as follows. Ribonucleoside-diphosphate reductase holoenzyme provides the precursors necessary for viral DNA synthesis. Allows virus growth in non-dividing cells, as well as reactivation from latency in infected hosts. Catalyzes the biosynthesis of deoxyribonucleotides from the corresponding ribonucleotides. The protein is Ribonucleoside-diphosphate reductase small subunit of Homo sapiens (Human).